Reading from the N-terminus, the 296-residue chain is 4-hydroxy-tetrahydrodipicolinate synthase (296 aa).

Position 49 (T49) interacts with pyruvate. Residue Y137 is the Proton donor/acceptor of the active site. K166 acts as the Schiff-base intermediate with substrate in catalysis. I208 is a pyruvate binding site.

The protein belongs to the DapA family. Homotetramer; dimer of dimers.

Its subcellular location is the cytoplasm. It carries out the reaction L-aspartate 4-semialdehyde + pyruvate = (2S,4S)-4-hydroxy-2,3,4,5-tetrahydrodipicolinate + H2O + H(+). It participates in amino-acid biosynthesis; L-lysine biosynthesis via DAP pathway; (S)-tetrahydrodipicolinate from L-aspartate: step 3/4. Functionally, catalyzes the condensation of (S)-aspartate-beta-semialdehyde [(S)-ASA] and pyruvate to 4-hydroxy-tetrahydrodipicolinate (HTPA). The chain is 4-hydroxy-tetrahydrodipicolinate synthase from Azobacteroides pseudotrichonymphae genomovar. CFP2.